Here is a 725-residue protein sequence, read N- to C-terminus: Catalase-peroxidase (725 aa).

A cross-link (tryptophyl-tyrosyl-methioninium (Trp-Tyr) (with M-239)) is located at residues 90-213 (WHSAGTYRTG…LAAVQMGLIY (124 aa)). His-91 serves as the catalytic Proton acceptor. The tryptophyl-tyrosyl-methioninium (Tyr-Met) (with W-90) cross-link spans 213 to 239 (YVNPEGPNGNPDPVAAAKDIRETFARM). His-254 serves as a coordination point for heme b.

Belongs to the peroxidase family. Peroxidase/catalase subfamily. In terms of assembly, homodimer or homotetramer. Heme b is required as a cofactor. Post-translationally, formation of the three residue Trp-Tyr-Met cross-link is important for the catalase, but not the peroxidase activity of the enzyme.

It carries out the reaction H2O2 + AH2 = A + 2 H2O. The enzyme catalyses 2 H2O2 = O2 + 2 H2O. Its function is as follows. Bifunctional enzyme with both catalase and broad-spectrum peroxidase activity. In Hahella chejuensis (strain KCTC 2396), this protein is Catalase-peroxidase.